A 531-amino-acid chain; its full sequence is MILSHRYTLIALAAAILSSGAHAAGASVTASWGNVAEPSLPADSAVCKTLAATITPVSGSIDTVDGNPSNSQPDASRIQTAIDNCPAGQAVRLVKGSAGESGFLSGSLKLKSGVTLWIDTGVTLFASRNPADFDNGVGTCGTATTSNTKSCNALIVARDTVGSGIVGDGIIDGRGGSLVTSGPNANRLTWWDIAYLNKTKGLNQQNPRLVQLYNGSAFTLYRVTVQNSPNFHIVTTGTAGVTAWGIKIVTPSLAYTVPGYKCAAGTTPDKVTPATCFTPETVKNTDGFDPGQSTNVVLANSYISTGDDHVAIKASGGATRNLLFAHNHFYYGHGLSIGSETDGGVSNMQVTDLAMDGNDSSGGNGLRIKSDISRGGKVNNIVYNGICMRNVKEPLVFDPFYSTAKGSLYPNFTNIVVKNFHDLGSAKGIARTMTFLGYEAKKRTNPLTLTLDNVVFDGTQPAFDVAHNGGPASPNGTHFTFGGNGPVSFANAIVTSSTTDVTVTGTPGTAAAVDCSNAFVPLKSVAPTSPI.

A signal peptide spans 1–23 (MILSHRYTLIALAAAILSSGAHA). D307 functions as the Proton donor in the catalytic mechanism. H333 is a catalytic residue. The interval 518–531 (AFVPLKSVAPTSPI) is required for PGA export across the outer membrane and catalytic activity.

It belongs to the glycosyl hydrolase 28 family. Monomer.

It is found in the secreted. The enzyme catalyses (1,4-alpha-D-galacturonosyl)n+m + H2O = (1,4-alpha-D-galacturonosyl)n + (1,4-alpha-D-galacturonosyl)m.. In terms of biological role, contributes to the wilt disease production on tomato. In Ralstonia nicotianae (strain ATCC BAA-1114 / GMI1000) (Ralstonia solanacearum), this protein is Polygalacturonase (pglA).